A 293-amino-acid polypeptide reads, in one-letter code: 4-hydroxybenzoate octaprenyltransferase (293 aa).

8 helical membrane passes run 19 to 39 (PIGI…ASNG), 43 to 63 (WLIL…GCVV), 95 to 115 (LLAA…NALV), 135 to 155 (FFAI…PMSY), 158 to 178 (LWGE…FWAI), 209 to 229 (LTAI…VGAL), 231 to 251 (DFSG…VYHL), and 266 to 286 (FLHN…HFLL).

The protein belongs to the UbiA prenyltransferase family. It depends on Mg(2+) as a cofactor.

It is found in the cell inner membrane. The enzyme catalyses all-trans-octaprenyl diphosphate + 4-hydroxybenzoate = 4-hydroxy-3-(all-trans-octaprenyl)benzoate + diphosphate. It participates in cofactor biosynthesis; ubiquinone biosynthesis. Functionally, catalyzes the prenylation of para-hydroxybenzoate (PHB) with an all-trans polyprenyl group. Mediates the second step in the final reaction sequence of ubiquinone-8 (UQ-8) biosynthesis, which is the condensation of the polyisoprenoid side chain with PHB, generating the first membrane-bound Q intermediate 3-octaprenyl-4-hydroxybenzoate. This is 4-hydroxybenzoate octaprenyltransferase from Thiobacillus denitrificans (strain ATCC 25259 / T1).